A 515-amino-acid polypeptide reads, in one-letter code: Maturase K (515 aa).

The protein belongs to the intron maturase 2 family. MatK subfamily.

The protein localises to the plastid. The protein resides in the chloroplast. Usually encoded in the trnK tRNA gene intron. Probably assists in splicing its own and other chloroplast group II introns. The polypeptide is Maturase K (Pinus cembra (Swiss stone pine)).